The chain runs to 600 residues: 1,8-cineole synthase 1, chloroplastic (600 aa).

The transit peptide at 1–31 directs the protein to the chloroplast; that stretch reads MATLRISSALIYQNTLTHHFRLRRPHRFVCK. Dimethylallyl diphosphate is bound at residue Asp342. Mg(2+) contacts are provided by Asp342 and Asp346. The DDXXD motif motif lies at 342-346; the sequence is DDIYD. 3 residues coordinate dimethylallyl diphosphate: Glu420, Arg484, and Asn487. Residues Asn487, Thr491, and Glu495 each coordinate Mg(2+).

This sequence belongs to the terpene synthase family. Tpsb subfamily. Mg(2+) is required as a cofactor. The cofactor is Mn(2+). In terms of tissue distribution, predominantly expressed in roots and at much lower levels in siliques. Not found in leaves, flowers or stems. Also detected in flowers in cv. Landsberg erecta. Not expressed in root apical meristem and elongation zone. Found in the vascular system of young roots and additionally in the cortex and epidermal cell layer of older roots.

Its subcellular location is the plastid. The protein localises to the chloroplast. The enzyme catalyses (2E)-geranyl diphosphate + H2O = 1,8-cineole + diphosphate. It participates in secondary metabolite biosynthesis; terpenoid biosynthesis. Its function is as follows. Involved in monoterpene (C10) biosynthesis. The major product is 1,8-cineole (52%) followed by minor amounts of sabinene (14.5%), myrcene (13.3%), (-)-(1S)-beta-pinene (7.8%), (-)-(4S)-limonene (4.0%), (E)-beta-ocimene (2.7%), alpha-terpineol (2.4%), (-)-(1S)-alpha-pinene (1.9%), terpinolene (0.8%), and (+)-alpha-thujene (0.6%). In Arabidopsis thaliana (Mouse-ear cress), this protein is 1,8-cineole synthase 1, chloroplastic (TPS27).